The primary structure comprises 666 residues: Endogenous retrovirus group K member 6 Gag polyprotein (666 aa).

The N-myristoyl glycine moiety is linked to residue Gly-2. The interval 165-264 (GKGPELVGPS…APPSRQGSKL (100 aa)) is disordered. The segment covering 232–247 (GMPPAPQGRAPYPQPP) has biased composition (pro residues). 2 CCHC-type zinc fingers span residues 544 to 561 (RKCY…NCPV) and 580 to 597 (DLCP…QCRS). The disordered stretch occupies residues 598–642 (KFDKNGQPLSGNEQRGQPQAPQQTGAFPIQPFVPQGFQGQQPPLS). Over residues 604–622 (QPLSGNEQRGQPQAPQQTG) the composition is skewed to polar residues. The segment covering 624-640 (FPIQPFVPQGFQGQQPP) has biased composition (low complexity).

It belongs to the beta type-B retroviral Gag protein family. HERV class-II K(HML-2) gag subfamily. Post-translationally, myristoylation is essential for retroviral assembly. Alteration of the glycine residue leads to a block in the budding of particles and an accumulation of Gag inside the cell. Specific enzymatic cleavages may yield mature proteins.

The protein resides in the cell membrane. The products of the Gag polyproteins of infectious retroviruses perform highly complex orchestrated tasks during the assembly, budding, maturation, and infection stages of the viral replication cycle. During viral assembly, the proteins form membrane associations and self-associations that ultimately result in budding of an immature virion from the infected cell. Gag precursors also function during viral assembly to selectively bind and package two plus strands of genomic RNA. Endogenous Gag proteins may have kept, lost or modified their original function during evolution. This Homo sapiens (Human) protein is Endogenous retrovirus group K member 6 Gag polyprotein (ERVK-6).